Reading from the N-terminus, the 301-residue chain is uncharacterized protein (301 aa).

A compositionally biased stretch (basic and acidic residues) spans 16-28 (EITEESEKTKTDL). A disordered region spans residues 16–38 (EITEESEKTKTDLQKANTPNKTE). A compositionally biased stretch (polar residues) spans 29-38 (QKANTPNKTE). The G-patch domain maps to 252-301 (KENVALKMLQRCGWKEGQGLGQHNQGIINPLHVEISGFVTETKHSKINDK).

This is an uncharacterized protein from Schizosaccharomyces pombe (strain 972 / ATCC 24843) (Fission yeast).